Reading from the N-terminus, the 77-residue chain is MESILNNSVITFVAYVGIISIYLFVIPLILFYWMNNRWNVMGKLERLGVYGLVFLFFPGLILFSPFLNLRLRGNNEG.

2 consecutive transmembrane segments (helical) span residues 12-32 (FVAY…ILFY) and 47-67 (LGVY…SPFL).

Belongs to the complex I NdhL subunit family. In terms of assembly, NDH-1 can be composed of about 15 different subunits; different subcomplexes with different compositions have been identified which probably have different functions.

The protein resides in the cellular thylakoid membrane. The enzyme catalyses a plastoquinone + NADH + (n+1) H(+)(in) = a plastoquinol + NAD(+) + n H(+)(out). It carries out the reaction a plastoquinone + NADPH + (n+1) H(+)(in) = a plastoquinol + NADP(+) + n H(+)(out). Its function is as follows. NDH-1 shuttles electrons from an unknown electron donor, via FMN and iron-sulfur (Fe-S) centers, to quinones in the respiratory and/or the photosynthetic chain. The immediate electron acceptor for the enzyme in this species is believed to be plastoquinone. Couples the redox reaction to proton translocation, and thus conserves the redox energy in a proton gradient. Cyanobacterial NDH-1 also plays a role in inorganic carbon-concentration. This chain is NAD(P)H-quinone oxidoreductase subunit L, found in Prochlorococcus marinus (strain MIT 9515).